The sequence spans 106 residues: Large ribosomal subunit protein uL24 (106 aa).

The protein belongs to the universal ribosomal protein uL24 family. In terms of assembly, part of the 50S ribosomal subunit.

Its function is as follows. One of two assembly initiator proteins, it binds directly to the 5'-end of the 23S rRNA, where it nucleates assembly of the 50S subunit. One of the proteins that surrounds the polypeptide exit tunnel on the outside of the subunit. The protein is Large ribosomal subunit protein uL24 of Dechloromonas aromatica (strain RCB).